Here is a 362-residue protein sequence, read N- to C-terminus: Heat-inducible transcription repressor HrcA (362 aa).

Belongs to the HrcA family.

Its function is as follows. Negative regulator of class I heat shock genes (grpE-dnaK-dnaJ and groELS operons). Prevents heat-shock induction of these operons. In Rhodopseudomonas palustris (strain BisB18), this protein is Heat-inducible transcription repressor HrcA.